Consider the following 159-residue polypeptide: Small ribosomal subunit protein uS7c (159 aa).

Belongs to the universal ribosomal protein uS7 family. Part of the 30S ribosomal subunit.

The protein localises to the plastid. Its subcellular location is the chloroplast. One of the primary rRNA binding proteins, it binds directly to 16S rRNA where it nucleates assembly of the head domain of the 30S subunit. This Bigelowiella natans (Pedinomonas minutissima) protein is Small ribosomal subunit protein uS7c (rps7).